A 195-amino-acid chain; its full sequence is Probable GTP-binding protein EngB (195 aa).

The region spanning 24–195 (GLSEVALSGR…QIWDLIANYL (172 aa)) is the EngB-type G domain. Residues 32–39 (GRSNVGKS), 59–63 (GKTQT), 77–80 (DVPG), 144–147 (TKED), and 176–178 (YSS) each bind GTP. 2 residues coordinate Mg(2+): serine 39 and threonine 61.

This sequence belongs to the TRAFAC class TrmE-Era-EngA-EngB-Septin-like GTPase superfamily. EngB GTPase family. Requires Mg(2+) as cofactor.

In terms of biological role, necessary for normal cell division and for the maintenance of normal septation. The polypeptide is Probable GTP-binding protein EngB (Staphylococcus haemolyticus (strain JCSC1435)).